A 152-amino-acid polypeptide reads, in one-letter code: Deoxyuridine 5'-triphosphate nucleotidohydrolase (152 aa).

Substrate is bound by residues 71-73 (RSG), Asn84, 88-90 (LID), and Met98.

Belongs to the dUTPase family. Mg(2+) serves as cofactor.

It carries out the reaction dUTP + H2O = dUMP + diphosphate + H(+). It participates in pyrimidine metabolism; dUMP biosynthesis; dUMP from dCTP (dUTP route): step 2/2. Functionally, this enzyme is involved in nucleotide metabolism: it produces dUMP, the immediate precursor of thymidine nucleotides and it decreases the intracellular concentration of dUTP so that uracil cannot be incorporated into DNA. In Shewanella sediminis (strain HAW-EB3), this protein is Deoxyuridine 5'-triphosphate nucleotidohydrolase.